Here is a 492-residue protein sequence, read N- to C-terminus: Monocarboxylate transporter 3 (492 aa).

Topologically, residues Met-1–Asp-14 are cytoplasmic. The chain crosses the membrane as a helical span at residues Gly-15–Phe-35. Residues Pro-36–Ala-58 lie on the Extracellular side of the membrane. Residues Trp-59–Val-79 form a helical membrane-spanning segment. The Cytoplasmic portion of the chain corresponds to Thr-80–Arg-85. A helical membrane pass occupies residues Pro-86–Ser-106. The Extracellular segment spans residues Arg-107–Ala-115. A helical membrane pass occupies residues Gly-116–Leu-136. Topologically, residues Tyr-137–Asn-146 are cytoplasmic. A helical transmembrane segment spans residues Gly-147–Leu-167. Residues Gly-168 to Gly-172 lie on the Extracellular side of the membrane. The helical transmembrane segment at Trp-173–Val-193 threads the bilayer. Residues Met-194 to Ala-228 lie on the Cytoplasmic side of the membrane. Residues Phe-229–Leu-249 traverse the membrane as a helical segment. The Extracellular portion of the chain corresponds to Leu-250–Ala-257. Residues Gly-258 to Ala-278 form a helical membrane-spanning segment. The Cytoplasmic portion of the chain corresponds to Arg-279–Pro-293. A helical membrane pass occupies residues His-294–Ala-314. The Extracellular segment spans residues Arg-315 to Ser-318. Residues Tyr-319 to Leu-339 traverse the membrane as a helical segment. At Gln-340–Arg-352 the chain is on the cytoplasmic side. A helical membrane pass occupies residues Phe-353–Pro-373. The Extracellular portion of the chain corresponds to Ser-374 to Glu-386. A helical transmembrane segment spans residues Ile-387–Thr-407. At Tyr-408 to Ala-492 the chain is on the cytoplasmic side. The interval Ser-419–Ala-492 is disordered. Basolateral sorting signal regions lie at residues Gly-426–Pro-460 and Arg-461–Ile-482. Residues Glu-476–Ala-492 are compositionally biased toward basic and acidic residues.

This sequence belongs to the major facilitator superfamily. Monocarboxylate porter (TC 2.A.1.13) family. In terms of tissue distribution, expressed exclusively in retinal pigment epithelium and choroid plexus epithelium.

It is found in the basolateral cell membrane. It carries out the reaction (S)-lactate(in) + H(+)(in) = (S)-lactate(out) + H(+)(out). Functionally, probable retinal pigment epithelium (RPE)-specific proton-coupled L-lactate transporter. May facilitate transport of lactate and H(+) out of the retina and could therefore play an essential role in maintenance of metabolic and ionic homeostasis of the outer retina. The chain is Monocarboxylate transporter 3 (Slc16a8) from Mus musculus (Mouse).